Reading from the N-terminus, the 559-residue chain is MNKLRSSAITQGVQRSPNRSMLRAVGFSDDDFTKPIIGVANGYSTITPCNMGLNKLALKAEDSIRKSGGMPQMFGTITVSDGISMGTEGMKYSLVSREVIADSIETACNAQSMDGVLAIGGCDKNMPGAMIAIARMNIPSIFIYGGTIKPGKLNGEDLTVVSAFEAVGQLTSGKINEKRLNEVEKNCIPGAGSCGGMFTANTMSAVIEVLGLSLPHSSTMAAEDYEKVVSAEKSAEILVDAIKKDIRPLDLMTKESFENAISVIMAIGGSTNAVLHILAIANTAGIEINIDDFERIRQKVPVICDLKPSGRYVTVDLHNAGGIPQVMKILLNAGLINGDCKNIEGKTISEYLLNIPDNPPENQNVIRNINNPLYKKGHLAILKGNLASEGCVAKISGVKNPVLKGPARIFESEEDCLKSILNNDIKAGNVVVIRNEGPVGGPGMREMLAPTSAIVGQGLGEKVALITDGRFSGGTYGLVVGHIAPEAAVGGNIALIREGDLITVDAVNQLIEVELSDGELEKRRINWIKPIPKYKKGVLSKYSRIVSTSSLGAVTDLEK.

Cys-49 is a [2Fe-2S] cluster binding site. Residue Asp-81 participates in Mg(2+) binding. Position 122 (Cys-122) interacts with [2Fe-2S] cluster. Mg(2+)-binding residues include Asp-123 and Lys-124. Lys-124 bears the N6-carboxylysine mark. Cys-194 is a binding site for [2Fe-2S] cluster. Mg(2+) is bound at residue Glu-446. Catalysis depends on Ser-472, which acts as the Proton acceptor.

Belongs to the IlvD/Edd family. In terms of assembly, homodimer. [2Fe-2S] cluster serves as cofactor. Mg(2+) is required as a cofactor.

It carries out the reaction (2R)-2,3-dihydroxy-3-methylbutanoate = 3-methyl-2-oxobutanoate + H2O. It catalyses the reaction (2R,3R)-2,3-dihydroxy-3-methylpentanoate = (S)-3-methyl-2-oxopentanoate + H2O. It functions in the pathway amino-acid biosynthesis; L-isoleucine biosynthesis; L-isoleucine from 2-oxobutanoate: step 3/4. Its pathway is amino-acid biosynthesis; L-valine biosynthesis; L-valine from pyruvate: step 3/4. Its function is as follows. Functions in the biosynthesis of branched-chain amino acids. Catalyzes the dehydration of (2R,3R)-2,3-dihydroxy-3-methylpentanoate (2,3-dihydroxy-3-methylvalerate) into 2-oxo-3-methylpentanoate (2-oxo-3-methylvalerate) and of (2R)-2,3-dihydroxy-3-methylbutanoate (2,3-dihydroxyisovalerate) into 2-oxo-3-methylbutanoate (2-oxoisovalerate), the penultimate precursor to L-isoleucine and L-valine, respectively. The polypeptide is Dihydroxy-acid dehydratase (Prochlorococcus marinus (strain MIT 9515)).